The following is a 127-amino-acid chain: Movement protein TGB2 (127 aa).

Residues 1-24 (MSLSHGTGAPAISTPLTLRPPPDN) are Cytoplasmic-facing. Residues 25-45 (TKAILTIAIGIAASLVFFMLT) traverse the membrane as a helical segment. Topologically, residues 46–85 (RNNLPHVGDNIHSLPHGGSYIDGTKSINYRPPASRYPSSN) are lumenal. The helical transmembrane segment at 86–106 (LLAFAPPILAAVLFFLTQPYL) threads the bilayer. The Cytoplasmic segment spans residues 107–127 (ATRRSRCVRCFVVHGACTNHT).

The protein belongs to the Tymovirales TGBp2 protein family.

The protein localises to the host endoplasmic reticulum membrane. Its function is as follows. Plays a role in viral cell-to-cell propagation, by facilitating genome transport to neighboring plant cells through plasmosdesmata,. This Setaria italica (Foxtail millet) protein is Movement protein TGB2.